Here is a 388-residue protein sequence, read N- to C-terminus: Succinate--CoA ligase [ADP-forming] subunit beta (388 aa).

Residues 9-244 enclose the ATP-grasp domain; sequence KQLFARYGMP…PSQEDAREAH (236 aa). Residues Lys46, 53–55, Glu99, Thr102, and Glu107 each bind ATP; that span reads GRG. Residues Asn199 and Asp213 each coordinate Mg(2+). Substrate contacts are provided by residues Asn264 and 321 to 323; that span reads GIV.

Belongs to the succinate/malate CoA ligase beta subunit family. Heterotetramer of two alpha and two beta subunits. Requires Mg(2+) as cofactor.

The enzyme catalyses succinate + ATP + CoA = succinyl-CoA + ADP + phosphate. It carries out the reaction GTP + succinate + CoA = succinyl-CoA + GDP + phosphate. Its pathway is carbohydrate metabolism; tricarboxylic acid cycle; succinate from succinyl-CoA (ligase route): step 1/1. Its function is as follows. Succinyl-CoA synthetase functions in the citric acid cycle (TCA), coupling the hydrolysis of succinyl-CoA to the synthesis of either ATP or GTP and thus represents the only step of substrate-level phosphorylation in the TCA. The beta subunit provides nucleotide specificity of the enzyme and binds the substrate succinate, while the binding sites for coenzyme A and phosphate are found in the alpha subunit. The chain is Succinate--CoA ligase [ADP-forming] subunit beta from Yersinia pseudotuberculosis serotype O:1b (strain IP 31758).